A 240-amino-acid chain; its full sequence is Probable ATP synthase 24 kDa subunit, mitochondrial (240 aa).

Residues 1–32 constitute a mitochondrion transit peptide; it reads MAYASRFLSRSKQLQGGLVILQQQHAIPVRAF. Composition is skewed to basic and acidic residues over residues 210-222 and 229-240; these read AVEA…KKEE and PDVKSLDIRNFI. The interval 210 to 240 is disordered; sequence AVEAMESQKKKEEFQDEEMPDVKSLDIRNFI.

Its subcellular location is the mitochondrion. It is found in the mitochondrion inner membrane. Its function is as follows. Mitochondrial membrane ATP synthase (F(1)F(0) ATP synthase or Complex V) produces ATP from ADP in the presence of a proton gradient across the membrane which is generated by electron transport complexes of the respiratory chain. F-type ATPases consist of two structural domains, F(1) - containing the extramembraneous catalytic core and F(0) - containing the membrane proton channel, linked together by a central stalk and a peripheral stalk. During catalysis, ATP synthesis in the catalytic domain of F(1) is coupled via a rotary mechanism of the central stalk subunits to proton translocation. Part of the complex F(0) domain. The sequence is that of Probable ATP synthase 24 kDa subunit, mitochondrial from Arabidopsis thaliana (Mouse-ear cress).